Reading from the N-terminus, the 371-residue chain is MALETFVNSEPFTFGVELEIQIVNTHNYDLTKAASDLMRLIKDAKFPGNITPEITESMIELSTGICRTHDQALGELHAIRDTLVNAADQLNVGLCGGGTHAFQQWSERQIFDAPRFQYISELYGYLAKQFTVFGQHVHIGCPDADSALFLLHSMSRFIPHFIALSASSPYVQNVDTGFHSARLNSVFAFPLSGRAPFVLTWSGFEEYFTKMVNTGVVNSMKDFYWDIRPKPGYGTIEVRVMDTPLSVDRAAAIACYIQTLARYLLIDRPLKLSEDDYLVYTFNRFEACRFGLEGTCVNPQTGERRTIAEDILDTLDRIAPHAAALGSRAALDEIGALAKARVNDASWLRTIFKQEKSLNETVRQQCLRWRE.

It belongs to the glutamate--cysteine ligase type 2 family. YbdK subfamily.

It catalyses the reaction L-cysteine + L-glutamate + ATP = gamma-L-glutamyl-L-cysteine + ADP + phosphate + H(+). Its function is as follows. ATP-dependent carboxylate-amine ligase which exhibits weak glutamate--cysteine ligase activity. This Burkholderia thailandensis (strain ATCC 700388 / DSM 13276 / CCUG 48851 / CIP 106301 / E264) protein is Putative glutamate--cysteine ligase 2.